The primary structure comprises 300 residues: LysM and putative peptidoglycan-binding domain-containing protein 3 (300 aa).

The Extracellular segment spans residues 1–216 (MAGRNQNRTA…PYYGADWGMG (216 aa)). N-linked (GlcNAc...) asparagine glycans are attached at residues Asn7 and Asn26. Ser55 bears the Phosphoserine mark. One can recognise a LysM domain in the interval 65-109 (LTKDIQEGDTLNAVALQYCCTVADIKRVNNLISDQDFFALRSIKI). The interval 136–157 (PYFQEQDTVPANDSPSSSESAG) is disordered. Residues 140–156 (EQDTVPANDSPSSSESA) show a composition bias toward polar residues. Asn199 is a glycosylation site (N-linked (GlcNAc...) asparagine). The chain crosses the membrane as a helical span at residues 217-237 (WWTAVVIMLIVGIITPVFYLL). Topologically, residues 238-300 (YYEILAKVDV…LYRQDPQARD (63 aa)) are cytoplasmic. The tract at residues 253-300 (VDSSHLHPGLTPPSHHREMGNAIGPTKGIPVGQQDDHRLYRQDPQARD) is disordered. The segment covering 286–300 (QDDHRLYRQDPQARD) has biased composition (basic and acidic residues).

The protein resides in the cell membrane. Its subcellular location is the golgi apparatus. Functionally, essential for Golgi structural integrity. In Rattus norvegicus (Rat), this protein is LysM and putative peptidoglycan-binding domain-containing protein 3 (Lysmd3).